Here is a 143-residue protein sequence, read N- to C-terminus: Large ribosomal subunit protein uL11 (143 aa).

The protein belongs to the universal ribosomal protein uL11 family. As to quaternary structure, part of the ribosomal stalk of the 50S ribosomal subunit. Interacts with L10 and the large rRNA to form the base of the stalk. L10 forms an elongated spine to which L12 dimers bind in a sequential fashion forming a multimeric L10(L12)X complex. Post-translationally, one or more lysine residues are methylated.

In terms of biological role, forms part of the ribosomal stalk which helps the ribosome interact with GTP-bound translation factors. The sequence is that of Large ribosomal subunit protein uL11 from Erythrobacter litoralis (strain HTCC2594).